The chain runs to 473 residues: Photosystem II CP43 reaction center protein (473 aa).

Residues 1–14 constitute a propeptide that is removed on maturation; the sequence is MKTLYSLRRFYHVE. Residue T15 is modified to N-acetylthreonine. At T15 the chain carries Phosphothreonine. 5 helical membrane-spanning segments follow: residues 69–93, 134–155, 178–200, 255–275, and 291–312; these read LFEV…PHLA, LLGP…KDRN, KALY…RKIT, KPFA…LSYS, and WFNN…ASQA. E367 contributes to the [CaMn4O5] cluster binding site. A helical membrane pass occupies residues 447–471; that stretch reads RARAAAAGFEKGIDRDFEPVLSMTP.

It belongs to the PsbB/PsbC family. PsbC subfamily. As to quaternary structure, PSII is composed of 1 copy each of membrane proteins PsbA, PsbB, PsbC, PsbD, PsbE, PsbF, PsbH, PsbI, PsbJ, PsbK, PsbL, PsbM, PsbT, PsbX, PsbY, PsbZ, Psb30/Ycf12, at least 3 peripheral proteins of the oxygen-evolving complex and a large number of cofactors. It forms dimeric complexes. Binds multiple chlorophylls and provides some of the ligands for the Ca-4Mn-5O cluster of the oxygen-evolving complex. It may also provide a ligand for a Cl- that is required for oxygen evolution. PSII binds additional chlorophylls, carotenoids and specific lipids. serves as cofactor.

Its subcellular location is the plastid. It is found in the chloroplast thylakoid membrane. Its function is as follows. One of the components of the core complex of photosystem II (PSII). It binds chlorophyll and helps catalyze the primary light-induced photochemical processes of PSII. PSII is a light-driven water:plastoquinone oxidoreductase, using light energy to abstract electrons from H(2)O, generating O(2) and a proton gradient subsequently used for ATP formation. The sequence is that of Photosystem II CP43 reaction center protein from Chloranthus spicatus (Chulantree).